A 381-amino-acid polypeptide reads, in one-letter code: Sulfate adenylyltransferase (381 aa).

It belongs to the sulfate adenylyltransferase family.

The catalysed reaction is sulfate + ATP + H(+) = adenosine 5'-phosphosulfate + diphosphate. It participates in sulfur metabolism; hydrogen sulfide biosynthesis; sulfite from sulfate: step 1/3. The polypeptide is Sulfate adenylyltransferase (Carboxydothermus hydrogenoformans (strain ATCC BAA-161 / DSM 6008 / Z-2901)).